The primary structure comprises 143 residues: Anti-sigma F factor (143 aa).

It belongs to the anti-sigma-factor family.

It carries out the reaction L-seryl-[protein] + ATP = O-phospho-L-seryl-[protein] + ADP + H(+). It catalyses the reaction L-threonyl-[protein] + ATP = O-phospho-L-threonyl-[protein] + ADP + H(+). Its function is as follows. Binds to sigma F and blocks its ability to form an RNA polymerase holoenzyme (E-sigma F). Phosphorylates SpoIIAA on a serine residue. This phosphorylation may enable SpoIIAA to act as an anti-anti-sigma factor that counteracts SpoIIAB and thus releases sigma F from inhibition. The sequence is that of Anti-sigma F factor from Thermoanaerobacter pseudethanolicus (strain ATCC 33223 / 39E) (Clostridium thermohydrosulfuricum).